The primary structure comprises 380 residues: Tryptophan 2,3-dioxygenase (380 aa).

Residues 57–61 (FIITH) and Arg128 contribute to the substrate site. A heme-binding site is contributed by His313. A substrate-binding site is contributed by Thr328.

The protein belongs to the tryptophan 2,3-dioxygenase family. In terms of assembly, homotetramer. Dimer of dimers. Requires heme as cofactor.

It carries out the reaction L-tryptophan + O2 = N-formyl-L-kynurenine. Its pathway is amino-acid degradation; L-tryptophan degradation via kynurenine pathway; L-kynurenine from L-tryptophan: step 1/2. It participates in pigment biosynthesis; ommochrome biosynthesis. Functionally, heme-dependent dioxygenase that catalyzes the oxidative cleavage of the L-tryptophan (L-Trp) pyrrole ring and converts L-tryptophan to N-formyl-L-kynurenine. Catalyzes the oxidative cleavage of the indole moiety. This Drosophila mojavensis (Fruit fly) protein is Tryptophan 2,3-dioxygenase.